A 318-amino-acid chain; its full sequence is Ferrochelatase (318 aa).

Fe cation-binding residues include histidine 186 and glutamate 264.

This sequence belongs to the ferrochelatase family.

It localises to the cytoplasm. The enzyme catalyses heme b + 2 H(+) = protoporphyrin IX + Fe(2+). Its pathway is porphyrin-containing compound metabolism; protoheme biosynthesis; protoheme from protoporphyrin-IX: step 1/1. Functionally, catalyzes the ferrous insertion into protoporphyrin IX. The polypeptide is Ferrochelatase (Chlamydia felis (strain Fe/C-56) (Chlamydophila felis)).